Consider the following 1034-residue polypeptide: N-acetyl-beta-glucosaminyl-glycoprotein 4-beta-N-acetylgalactosaminyltransferase 1 (1034 aa).

Over 1 to 12 (MPWFPVKKVRKQ) the chain is Cytoplasmic. A helical; Signal-anchor for type II membrane protein membrane pass occupies residues 13 to 31 (MKLLLLLLLLTCAAWLTYV). Residues 32–1034 (HRSLVRPGRA…SRKGARAQRS (1003 aa)) lie on the Lumenal side of the membrane. The interval 51–104 (DGEKLTGVTDSRGVRVPSSTQRSEDSSESHEEEQAPEGRGPNMLFPGGPRKPPP) is disordered. A compositionally biased stretch (basic and acidic residues) spans 72–83 (RSEDSSESHEEE). Asn-106 carries N-linked (GlcNAc...) asparagine glycosylation. The PA14 domain occupies 109–279 (HQTPPWREEF…LKFEIIDSAH (171 aa)). Disordered stretches follow at residues 450–486 (PTDASVQQSHRTPTPAASTGTTASPTPPTTSPLDEQT) and 556–600 (RVQL…QLHG). The span at 461-473 (TPTPAASTGTTAS) shows a compositional bias: low complexity. The N-linked (GlcNAc...) asparagine glycan is linked to Asn-611. Disordered stretches follow at residues 626 to 669 (SQVS…PLGR) and 782 to 801 (GDEDGESPEPPPAASIHPDS). Residues 636–661 (EGEEGEEDGAPGDEATSEDSEEEEEP) show a composition bias toward acidic residues.

It belongs to the chondroitin N-acetylgalactosaminyltransferase family.

The protein resides in the golgi apparatus. It is found in the golgi stack membrane. It carries out the reaction an N-acetyl-beta-D-glucosaminyl derivative + UDP-N-acetyl-alpha-D-galactosamine = an N-acetyl-beta-D-galactosaminyl-(1-&gt;4)-N-acetyl-beta-D-glucosaminyl derivative + UDP + H(+). Transfers N-acetylgalactosamine (GalNAc) from UDP-GalNAc to N-acetylglucosamine-beta-benzyl with a beta-1,4-linkage to form N,N'-diacetyllactosediamine, GalNAc-beta-1,4-GlcNAc structures in N-linked glycans and probably O-linked glycans. This chain is N-acetyl-beta-glucosaminyl-glycoprotein 4-beta-N-acetylgalactosaminyltransferase 1 (B4galnt4), found in Mus musculus (Mouse).